Here is a 78-residue protein sequence, read N- to C-terminus: Translational regulator CsrA (78 aa).

The protein belongs to the CsrA/RsmA family. Homodimer; the beta-strands of each monomer intercalate to form a hydrophobic core, while the alpha-helices form wings that extend away from the core.

The protein resides in the cytoplasm. Its function is as follows. A translational regulator that binds mRNA to regulate translation initiation and/or mRNA stability. Usually binds in the 5'-UTR at or near the Shine-Dalgarno sequence preventing ribosome-binding, thus repressing translation. Its main target seems to be the major flagellin gene, while its function is anatagonized by FliW. This is Translational regulator CsrA from Borrelia hermsii (strain HS1 / DAH).